The chain runs to 120 residues: Large ribosomal subunit protein P3 (120 aa).

The tract at residues 83–120 (GGGGAAASGGAAAEAPKEEKKEEEKEESDDDMGFSLFD) is disordered.

Belongs to the eukaryotic ribosomal protein P1/P2 family. Post-translationally, phosphorylated.

Its function is as follows. Plays an important role in the elongation step of protein synthesis. The polypeptide is Large ribosomal subunit protein P3 (RPP3A) (Zea mays (Maize)).